Consider the following 848-residue polypeptide: Neurofilament medium polypeptide (848 aa).

Over residues 1–10 (MSYTLDSLGN) the composition is skewed to polar residues. Residues 1–51 (MSYTLDSLGNPSAYRRVTETRSSFSRVSGSPSSGFRSQSWSRGSPSTVSSS) are disordered. At Ser2 the chain carries N-acetylserine. The head stretch occupies residues 2 to 102 (SYTLDSLGNP…KLSRSNEKEQ (101 aa)). A compositionally biased stretch (low complexity) spans 21–44 (RSSFSRVSGSPSSGFRSQSWSRGS). Ser30 is modified (phosphoserine). The residue at position 42 (Arg42) is an Omega-N-methylarginine. Thr47 carries O-linked (GlcNAc) threonine glycosylation. Position 97 is a phosphoserine (Ser97). Residues 99–410 (EKEQLQGLND…KLLEGEETRF (312 aa)) form the IF rod domain. Positions 103-134 (LQGLNDRFAGYIEKVHYLEQQNKEIEAEIQAL) are coil 1A. The tract at residues 135–147 (RQKQASHAQLGDA) is linker 1. Positions 148 to 246 (YDQEIRELRA…EEEVADLLAQ (99 aa)) are coil 1B. Ser224 is subject to Phosphoserine. The segment at 247–263 (IQASHITVERKDYLKTD) is linker 12. The tract at residues 264–285 (ISTALKEIRSQLECHSDQNMHQ) is coil 2A. Residues 286–289 (AEEW) are linker 2. The coil 2B stretch occupies residues 290–410 (FKCRYAKLTE…KLLEGEETRF (121 aa)). Tyr318 is subject to Phosphotyrosine. Ser344, Ser416, and Ser428 each carry phosphoserine. The segment at 411–848 (STFSGSITGP…AIVKEVTQGD (438 aa)) is tail. O-linked (GlcNAc) threonine glycosylation occurs at Thr430. Phosphoserine occurs at positions 466 and 482. A disordered region spans residues 482–785 (SAKEEKEEAE…GEDSSDDKVV (304 aa)). Positions 488–498 (EEAEEKEEEPE) are enriched in acidic residues. Residues 499 to 509 (AEKSPVKSPEA) show a composition bias toward basic and acidic residues. 2 positions are modified to phosphoserine: Ser502 and Ser506. A compositionally biased stretch (acidic residues) spans 510–533 (KEEEEEGEKEEEEEGQEEEEEEDE). The span at 534–553 (GVKSDQAEEGGSEKEGSSEK) shows a compositional bias: basic and acidic residues. Phosphoserine occurs at positions 537, 545, 550, and 551. Residues 554–576 (DEGEQEEEEGETEAEGEGEEAEA) show a composition bias toward acidic residues. Thr565 bears the Phosphothreonine mark. Positions 577–604 (KEEKKIEGKVEEVAVKEEIKVEKPEKAK) are enriched in basic and acidic residues. Residues Ser605 and Ser610 each carry the phosphoserine modification. 2 stretches are compositionally biased toward basic and acidic residues: residues 611 to 677 (PVEE…KAVE) and 689 to 711 (SLEKDTKEEKPQPQEKVKEKAEE). Position 642 is a phosphothreonine (Thr642). A phosphoserine mark is found at Ser645, Ser669, Ser689, Ser715, Ser723, Ser753, and Ser769. Basic and acidic residues-rich tracts occupy residues 720–732 (SDRSPQESKKEDI) and 748–760 (TQEKGSGREEEKG). The span at 771-785 (AEEKKGEDSSDDKVV) shows a compositional bias: basic and acidic residues.

The protein belongs to the intermediate filament family. In terms of assembly, forms heterodimers with NEFL; which can further hetero-oligomerize (in vitro). Forms heterodimers with INA (in vitro). Post-translationally, there are a number of repeats of the tripeptide K-S-P, NFM is phosphorylated on a number of the serines in this motif. It is thought that phosphorylation of NFM results in the formation of interfilament cross bridges that are important in the maintenance of axonal caliber. Phosphorylation seems to play a major role in the functioning of the larger neurofilament polypeptides (NF-M and NF-H), the levels of phosphorylation being altered developmentally and coincidentally with a change in the neurofilament function. In terms of processing, phosphorylated in the head and rod regions by the PKC kinase PKN1, leading to the inhibition of polymerization. In terms of tissue distribution, expressed in the sciatic nerve (at protein level).

It localises to the cytoplasm. The protein localises to the cytoskeleton. It is found in the cell projection. Its subcellular location is the axon. Neurofilaments usually contain three intermediate filament proteins: NEFL, NEFM, and NEFH which are involved in the maintenance of neuronal caliber. May additionally cooperate with the neuronal intermediate filament proteins PRPH and INA to form neuronal filamentous networks. This chain is Neurofilament medium polypeptide (Nefm), found in Mus musculus (Mouse).